Reading from the N-terminus, the 354-residue chain is Protein-arginine kinase (354 aa).

Positions 24-254 (IVLSSRIRLA…QQIIQQEKMA (231 aa)) constitute a Phosphagen kinase C-terminal domain. ATP contacts are provided by residues 27 to 31 (SSRIR), His92, Arg125, 176 to 180 (RASVM), and 207 to 212 (RGIYGE). Residues 337–342 (RDYRRA) carry the RDXXRA motif of the pArg binding pocket involved in allosteric regulation motif.

Belongs to the ATP:guanido phosphotransferase family.

The catalysed reaction is L-arginyl-[protein] + ATP = N(omega)-phospho-L-arginyl-[protein] + ADP + H(+). With respect to regulation, appears to be allosterically activated by the binding of pArg-containing polypeptides to the pArg-binding pocket localized in the C-terminal domain of McsB. Functionally, catalyzes the specific phosphorylation of arginine residues in a large number of proteins. Is part of the bacterial stress response system. Protein arginine phosphorylation has a physiologically important role and is involved in the regulation of many critical cellular processes, such as protein homeostasis, motility, competence, and stringent and stress responses, by regulating gene expression and protein activity. This chain is Protein-arginine kinase, found in Bacillus thuringiensis subsp. konkukian (strain 97-27).